A 1308-amino-acid polypeptide reads, in one-letter code: Cilia- and flagella-associated protein 57 C (1308 aa).

WD repeat units lie at residues 57–99 (NEYR…RRKN), 110–154 (YNIK…KCLG), 415–454 (NHTG…IKIS), 504–546 (SPFK…NPSQ), 551–590 (GHTG…QHQQ), 645–689 (LLDI…GKFT), and 694–733 (HDER…ARGM). Residues 779–1000 (LNSRDDRIRQ…RDKIDGQKKI (222 aa)) adopt a coiled-coil conformation.

Belongs to the CFAP57 family. Forms a heterodimer with CFAP57A. Associates with components of the nexin-dynein regulatory complex (N-DRC) and the CFAP184:CFAP263 complex.

It localises to the cell projection. Its subcellular location is the cilium. Its function is as follows. Associates with components of the nexin-dynein regulatory complex (N-DRC), a key regulator of ciliary/flagellar motility, and might act as an inner dynein arm (IDA) hub or linkage. The protein is Cilia- and flagella-associated protein 57 C (CFAP57C) of Tetrahymena thermophila (strain SB210).